The chain runs to 323 residues: Cytosolic sulfotransferase 5 (323 aa).

Position 69–74 (69–74 (KCGTTW)) interacts with 3'-phosphoadenylyl sulfate. Catalysis depends on H135, which acts as the Proton acceptor. Residues R157, S165, and 289–291 (RKG) each bind 3'-phosphoadenylyl sulfate.

It belongs to the sulfotransferase 1 family. Expressed in inflorescence stems, roots and siliques.

The protein localises to the cytoplasm. Functionally, sulfotransferase that utilizes 3'-phospho-5'-adenylyl sulfate (PAPS) as sulfonate donor to specifically catalyze the sulfate conjugation of flavones and flavonols. Strictly specific for the position 7. Substrate preference is kaempferol 3-sulfate &gt; isorhamnetin &gt; kaempferol. The sequence is that of Cytosolic sulfotransferase 5 (SOT5) from Arabidopsis thaliana (Mouse-ear cress).